Here is a 1025-residue protein sequence, read N- to C-terminus: Multidrug resistance protein MdtC (1025 aa).

A run of 12 helical transmembrane segments spans residues 3–23 (FFAL…AITL), 333–353 (EVEQ…FLFL), 360–380 (IIPA…MYLC), 387–407 (LSLM…IVVL), 431–451 (VGFT…PLLL), 463–483 (FAVT…TLTP), 528–548 (LVGV…ISIP), 853–873 (VILI…LYES), 875–895 (VHPL…LLAL), 897–917 (LFNA…IGIV), 953–973 (PIMM…LSGG), and 984–1004 (ITIV…TPVV).

The protein belongs to the resistance-nodulation-cell division (RND) (TC 2.A.6) family. MdtC subfamily. As to quaternary structure, part of a tripartite efflux system composed of MdtA, MdtB and MdtC. MdtC forms a heteromultimer with MdtB.

It is found in the cell inner membrane. The sequence is that of Multidrug resistance protein MdtC from Shigella sonnei (strain Ss046).